We begin with the raw amino-acid sequence, 100 residues long: Small ribosomal subunit protein uS17 (100 aa).

It belongs to the universal ribosomal protein uS17 family. In terms of assembly, part of the 30S ribosomal subunit.

Its function is as follows. One of the primary rRNA binding proteins, it binds specifically to the 5'-end of 16S ribosomal RNA. The sequence is that of Small ribosomal subunit protein uS17 from Erythrobacter litoralis (strain HTCC2594).